The sequence spans 349 residues: tRNA pseudouridine synthase D (349 aa).

Phenylalanine 27 provides a ligand contact to substrate. Aspartate 80 acts as the Nucleophile in catalysis. Asparagine 129 contacts substrate. A TRUD domain is found at 155-303; that stretch reads GVPNYFGAQR…VEAARRAMLL (149 aa). Phenylalanine 329 lines the substrate pocket.

Belongs to the pseudouridine synthase TruD family.

It carries out the reaction uridine(13) in tRNA = pseudouridine(13) in tRNA. Its function is as follows. Responsible for synthesis of pseudouridine from uracil-13 in transfer RNAs. In Escherichia coli (strain SMS-3-5 / SECEC), this protein is tRNA pseudouridine synthase D.